A 483-amino-acid polypeptide reads, in one-letter code: Glutamate--tRNA ligase (483 aa).

Residues 11–21 carry the 'HIGH' region motif; the sequence is PSPTGLLHIGN. Residues 255-259 carry the 'KMSKS' region motif; it reads KLSKR. Position 258 (lysine 258) interacts with ATP.

It belongs to the class-I aminoacyl-tRNA synthetase family. Glutamate--tRNA ligase type 1 subfamily. In terms of assembly, monomer.

The protein resides in the cytoplasm. It carries out the reaction tRNA(Glu) + L-glutamate + ATP = L-glutamyl-tRNA(Glu) + AMP + diphosphate. Its function is as follows. Catalyzes the attachment of glutamate to tRNA(Glu) in a two-step reaction: glutamate is first activated by ATP to form Glu-AMP and then transferred to the acceptor end of tRNA(Glu). The polypeptide is Glutamate--tRNA ligase (Lactococcus lactis subsp. cremoris (strain SK11)).